The following is a 199-amino-acid chain: MSDSNNISSLYPPPPPYVKFFTKDNLERLAEYQSSHVTTDPEQITCELDFLIPPPVPSAGHYRAFGSVWQVKDELPDLETVGLRNLYDDRGQHGNNYQYKIKELHKLLKSLLLNMLELVSVLSVNPERFPDKVEHIRTILFNIHHLLNEYRPHQSRESLIMLLEEQLEHKKEEIANIHAICDKVQAKLAAMCKQYIADD.

This sequence belongs to the Mediator complex subunit 7 family. As to quaternary structure, component of the Mediator complex.

The protein resides in the nucleus. In terms of biological role, component of the Mediator complex, a coactivator involved in the regulated transcription of nearly all RNA polymerase II-dependent genes. Mediator functions as a bridge to convey information from gene-specific regulatory proteins to the basal RNA polymerase II transcription machinery. Mediator is recruited to promoters by direct interactions with regulatory proteins and serves as a scaffold for the assembly of a functional preinitiation complex with RNA polymerase II and the general transcription factors. The sequence is that of Mediator of RNA polymerase II transcription subunit 7 (MED7) from Eremothecium gossypii (strain ATCC 10895 / CBS 109.51 / FGSC 9923 / NRRL Y-1056) (Yeast).